The primary structure comprises 376 residues: MHAFLVILFMIVIGALIGGITNIIAIKMLFHPQRAYHIGKWRIPFTPGLVPKRREEIAYKIGNVIEEHLITESLIKEKISSLSAREAIESFITQQIQKLKKDNATLQNFAGYFGIDLAKTAEDKLSNLIDEKLAQYYQDHNQEPLKSLIPSELEVELDEKIEALTPLLCDRARIYLSSAKGEQDIYNMLDTFFAEKGKIIGLLQMFMTKENIAERIQMELIRLTNHPKAREIVAQLINNEYMTLKNKSLGGVVSPEQFNNIKEKFTPLILSYADISARVNQPIKDLAPSIVKYAEQHAATWTTNLIVEKAAEHLSSIMKQVNLSGIVEEQINSFDLDYIERLIIEIANKELKLIMLLGFLLGGIIGCLQGIIALFV.

The next 2 membrane-spanning stretches (helical) occupy residues 4–24 (FLVILFMIVIGALIGGITNII) and 356–376 (LLGFLLGGIIGCLQGIIALFV).

The protein belongs to the UPF0754 family.

Its subcellular location is the cell membrane. The chain is UPF0754 membrane protein Sca_1420 from Staphylococcus carnosus (strain TM300).